The sequence spans 681 residues: Methionine--tRNA ligase (681 aa).

The short motif at 14 to 24 is the 'HIGH' region element; it reads PYANGSIHLGH. The Zn(2+) site is built by Cys-145, Cys-148, Cys-158, and Cys-161. The 'KMSKS' region signature appears at 331-335; the sequence is KMSKS. Lys-334 contributes to the ATP binding site. The region spanning 579-681 is the tRNA-binding domain; that stretch reads AFAAIDLRVA…SGAKPGQRIK (103 aa).

It belongs to the class-I aminoacyl-tRNA synthetase family. MetG type 1 subfamily. Homodimer. Zn(2+) serves as cofactor.

The protein localises to the cytoplasm. The enzyme catalyses tRNA(Met) + L-methionine + ATP = L-methionyl-tRNA(Met) + AMP + diphosphate. In terms of biological role, is required not only for elongation of protein synthesis but also for the initiation of all mRNA translation through initiator tRNA(fMet) aminoacylation. This Pseudomonas fluorescens (strain ATCC BAA-477 / NRRL B-23932 / Pf-5) protein is Methionine--tRNA ligase.